The chain runs to 112 residues: Urocortin-2 (112 aa).

Residues 1–22 form the signal peptide; sequence MTRCALLLLMVLMLGRVLVVPV. Residues 23–70 constitute a propeptide that is removed on maturation; the sequence is TPIPTFQLRPQNSPQTTPRPAASESPSAAPTWPWAAQSHCSPTRHPGS. Residues 27 to 66 form a disordered region; it reads TFQLRPQNSPQTTPRPAASESPSAAPTWPWAAQSHCSPTR. Over residues 38–58 the composition is skewed to low complexity; that stretch reads TTPRPAASESPSAAPTWPWAA.

Belongs to the sauvagine/corticotropin-releasing factor/urotensin I family. As to quaternary structure, binds with high affinity to CRF receptors 2-alpha and 2-beta. Glycosylated.

It is found in the secreted. Functionally, suppresses food intake, delays gastric emptying and decreases heat-induced edema. Might represent an endogenous ligand for maintaining homeostasis after stress. The protein is Urocortin-2 (UCN2) of Homo sapiens (Human).